The chain runs to 476 residues: Proline dehydrogenase 2, mitochondrial (476 aa).

The transit peptide at 1–29 (MANRFLRPNLIHRFSTVSPVGPPTTIIPE) directs the protein to the mitochondrion.

This sequence belongs to the proline oxidase family. FAD serves as cofactor. Expressed in the vascular tissue and in the abscission zone of petals, sepals, stamina, pistils and siliques. Not detected in petioles.

It localises to the mitochondrion. It carries out the reaction L-proline + a quinone = (S)-1-pyrroline-5-carboxylate + a quinol + H(+). The protein operates within amino-acid degradation; L-proline degradation into L-glutamate; L-glutamate from L-proline: step 1/2. In terms of biological role, converts proline to delta-1-pyrroline-5-carboxylate. This chain is Proline dehydrogenase 2, mitochondrial (POX2), found in Arabidopsis thaliana (Mouse-ear cress).